Consider the following 118-residue polypeptide: HTH-type transcriptional regulator SarT (118 aa).

Residues 55-78 (MRDIISYIGIDQSRIVKSVKELSK) constitute a DNA-binding region (H-T-H motif).

Belongs to the SarA family.

The protein localises to the cytoplasm. In terms of biological role, transcriptional regulator acting as an intermediary between major regulators SarA and agr and virulence genes. Represses alpha-hemolysin (hla) gene expression. The sequence is that of HTH-type transcriptional regulator SarT (sarT) from Staphylococcus aureus (strain Mu50 / ATCC 700699).